The following is a 591-amino-acid chain: Probable indole-3-acetic acid-amido synthetase GH3.11 (591 aa).

This sequence belongs to the IAA-amido conjugating enzyme family. In terms of tissue distribution, expressed in etiolated and green seedlings, roots, callus and highly in flowers.

May catalyze the synthesis of indole-3-acetic acid (IAA)-amino acid conjugates, providing a mechanism for the plant to cope with the presence of excess auxin. The chain is Probable indole-3-acetic acid-amido synthetase GH3.11 (GH3.11) from Oryza sativa subsp. japonica (Rice).